The sequence spans 381 residues: Chaperone protein DnaJ (381 aa).

The J domain maps to 5-70 (DFYEVLGVSR…QKKAAYDQYG (66 aa)). A CR-type zinc finger spans residues 136 to 214 (GVSKEIEVPT…CHGQGRKQKT (79 aa)). Zn(2+) is bound by residues Cys149, Cys152, Cys166, Cys169, Cys188, Cys191, Cys202, and Cys205. 4 CXXCXGXG motif repeats span residues 149 to 156 (CDTCEGTG), 166 to 173 (CGTCHGHG), 188 to 195 (CPTCHGKG), and 202 to 209 (CNVCHGQG).

This sequence belongs to the DnaJ family. As to quaternary structure, homodimer. The cofactor is Zn(2+).

Its subcellular location is the cytoplasm. In terms of biological role, participates actively in the response to hyperosmotic and heat shock by preventing the aggregation of stress-denatured proteins and by disaggregating proteins, also in an autonomous, DnaK-independent fashion. Unfolded proteins bind initially to DnaJ; upon interaction with the DnaJ-bound protein, DnaK hydrolyzes its bound ATP, resulting in the formation of a stable complex. GrpE releases ADP from DnaK; ATP binding to DnaK triggers the release of the substrate protein, thus completing the reaction cycle. Several rounds of ATP-dependent interactions between DnaJ, DnaK and GrpE are required for fully efficient folding. Also involved, together with DnaK and GrpE, in the DNA replication of plasmids through activation of initiation proteins. The sequence is that of Chaperone protein DnaJ from Vibrio vulnificus (strain CMCP6).